The following is a 351-amino-acid chain: NAD-dependent protein deacetylase SIR2rp1 (351 aa).

A Deacetylase sirtuin-type domain is found at 10-325 (HVVGEPTFEG…RSFAQALGFG (316 aa)). Residues 37-57 (GAGI…TGLY) and 122-125 (QNID) contribute to the NAD(+) site. H142 functions as the Proton acceptor in the catalytic mechanism. The Zn(2+) site is built by C150, C153, C174, and C177. NAD(+) is bound by residues 213-215 (GTS) and 238-240 (NLE). The tract at residues 260–284 (SSYRLSTGNGNGSKISSGDSSNSSS) is disordered. Residues 265–284 (STGNGNGSKISSGDSSNSSS) are compositionally biased toward low complexity. Residue C311 coordinates NAD(+).

It belongs to the sirtuin family. Class I subfamily. Requires Zn(2+) as cofactor.

It is found in the nucleus. The protein localises to the chromosome. It localises to the telomere. The enzyme catalyses N(6)-acetyl-L-lysyl-[protein] + NAD(+) + H2O = 2''-O-acetyl-ADP-D-ribose + nicotinamide + L-lysyl-[protein]. In terms of biological role, NAD-dependent protein deacetylase, which is involved in repression of RNA polymerase I-mediated expression immediately adjacent to telomeres. It is however not involved in antigenic variation and subtelomeric variant surface glycoprotein (VSG) gene silencing. Plays a role in DNA damage response. Also has ADP-ribosylation activity in vitro. The polypeptide is NAD-dependent protein deacetylase SIR2rp1 (SIR2rp1) (Trypanosoma brucei brucei (strain 927/4 GUTat10.1)).